Reading from the N-terminus, the 391-residue chain is Cystathionine beta-lyase MetC (391 aa).

K196 is modified (N6-(pyridoxal phosphate)lysine).

Belongs to the trans-sulfuration enzymes family. In terms of assembly, homotetramer. Pyridoxal 5'-phosphate serves as cofactor.

The catalysed reaction is L,L-cystathionine + H2O = L-homocysteine + pyruvate + NH4(+). It catalyses the reaction an S-substituted L-cysteine + H2O = a thiol + pyruvate + NH4(+). It participates in amino-acid biosynthesis; L-methionine biosynthesis via de novo pathway; L-homocysteine from L-cystathionine: step 1/1. Cystathionine beta-lyase activity is inhibited by sweat components such as glycine, serine and ammonium sulfate. Inhibited by cystathionine at a concentration higher than 6 mM. Functionally, catalyzes the transformation of cystathionine into homocysteine. Can also catalyze, at low levels, the conversion of cystathionine into methionine and the conversion of methionine into methanethiol. The polypeptide is Cystathionine beta-lyase MetC (Staphylococcus haemolyticus (strain JCSC1435)).